Reading from the N-terminus, the 505-residue chain is MDLLLLEKTLLALFLAAITAITISKLRGKPFKLPPGPFPVPVFGNWLQVGDDLNHRNLTDLAKRFAEILLLRMEQRNLVVISSPELAKEVLHTQGVEFGSRTRNVVFDIFTGKGQDIVFTVYGEHWRKMRRIMTVPFFTNKVVQQYRFGWESEAASVVDDVKKNSKASVNGIVIRRRLQLMMYNIMYRIMFDRRFESEEDPLFVKLKALNGERSRLAQSFEYNYGDFIPILRPFLKGYLKVCKEVKDRRLQLFKDYFVDERKKLGSTKSTYNEGLKCAIDHILDAQKKGEINDDNVLYIVENINVAAIETTLWSIEWGIAELVNHQEIQNKLREEMDKVLGPGHQVTEPDLEKLPYLQAVIKETLRLRMAIPLLVPHMNLHDAKLGGFDIPAESKILVNAWWLANNPALWKKPEEFRPERFLEEEAHVEANGNDFRYLPFGVGRRSCPGIILALPILGITIGRLVQNFELLPPPGQSKIDTSEKGGQFSLHILKHSTIVAKPRAF.

A helical membrane pass occupies residues 3–23 (LLLLEKTLLALFLAAITAITI). (E)-cinnamate-binding positions include 213 to 218 (RSRLAQ) and alanine 306. A heme-binding site is contributed by cysteine 447.

Belongs to the cytochrome P450 family. Requires heme as cofactor.

Its subcellular location is the membrane. It carries out the reaction (E)-cinnamate + reduced [NADPH--hemoprotein reductase] + O2 = (E)-4-coumarate + oxidized [NADPH--hemoprotein reductase] + H2O + H(+). The protein operates within phenylpropanoid metabolism; trans-4-coumarate biosynthesis; trans-4-coumarate from trans-cinnamate: step 1/1. Its function is as follows. Catalyzes the first oxidative step of the phenylpropanoid pathway in higher plants by transforming trans-cinnamate into p-coumarate. The compounds formed by this pathway are essential components for lignification, pollination, and defense against ultraviolet light, predators and pathogens. This Pisum sativum (Garden pea) protein is Trans-cinnamate 4-monooxygenase (CYP73A9).